A 2037-amino-acid polypeptide reads, in one-letter code: Protein SWOLLEN 1 (2037 aa).

Disordered regions lie at residues 141-179 (VEPG…VKTD), 454-487 (REGG…NDRD), 504-531 (SVGY…TDKS), 567-637 (KTSS…KDAV), 686-705 (SLPI…DNTA), 837-893 (VGSP…SGGK), 1011-1045 (ATPE…PMIP), 1148-1197 (KHVQ…ESGP), 1729-1748 (SGET…KRPR), 1793-1812 (KSTR…TGLQ), and 1841-2037 (EAST…QSKK). The span at 147–157 (SHERSLSKEET) shows a compositional bias: basic and acidic residues. Over residues 158 to 176 (VNLQPNPSVDDTPGESSVV) the composition is skewed to polar residues. Residues 454-466 (REGGVSKKSDNEG) show a composition bias toward basic and acidic residues. Over residues 504–514 (SVGYVSGGSTS) the composition is skewed to low complexity. A compositionally biased stretch (polar residues) spans 515 to 526 (ELAESESQSDSI). Residues 841 to 852 (STSSLDKTAAKS) show a composition bias toward low complexity. Residues 853–865 (SKAKSERKPRRTS) show a composition bias toward basic residues. Composition is skewed to polar residues over residues 1025–1041 (ETPS…SGTN) and 1151–1171 (QSGT…TSTV). Positions 1179 to 1189 (TRVKSRKRKKM) are enriched in basic residues. The span at 1794–1805 (STREENKPDPLR) shows a compositional bias: basic and acidic residues. Composition is skewed to polar residues over residues 1874–1886 (KTIS…TISR), 1942–1964 (EEQT…STNK), and 2013–2023 (LQTSMMTSKIP). A compositionally biased stretch (basic residues) spans 2028 to 2037 (SKSHLSQSKK).

Interacts with importin alpha IMPA1 and IMPA2, required for nuclear-localized proteins import. As to expression, mainly expressed in seedlings, flower buds and stems, and, to a lower extent, in leaves and siliques.

The protein localises to the nucleus. Functionally, under salt stress, appears to prevent the accumulation of reactive oxygen species (ROS) in roots and required for the maintenance of cell wall integrity (cellulose, pectin and lignin composition) by interacting with importin alpha (e.g. IMPA1 and IMPA2) and binding to the promoter of several ROS- and cell wall-related genes to regulate their expression. Necessary for cells organization in meristems and root elongation zones as well as for root elongation in high salinity, but not upon osmotic stress. The polypeptide is Protein SWOLLEN 1 (Arabidopsis thaliana (Mouse-ear cress)).